Consider the following 173-residue polypeptide: Shikimate kinase (173 aa).

12–17 lines the ATP pocket; that stretch reads GSGKTT. Residue threonine 16 coordinates Mg(2+). Residues aspartate 34, arginine 58, and glycine 80 each contribute to the substrate site. Arginine 118 provides a ligand contact to ATP. A substrate-binding site is contributed by arginine 136.

The protein belongs to the shikimate kinase family. In terms of assembly, monomer. Mg(2+) serves as cofactor.

The protein resides in the cytoplasm. It catalyses the reaction shikimate + ATP = 3-phosphoshikimate + ADP + H(+). The protein operates within metabolic intermediate biosynthesis; chorismate biosynthesis; chorismate from D-erythrose 4-phosphate and phosphoenolpyruvate: step 5/7. Functionally, catalyzes the specific phosphorylation of the 3-hydroxyl group of shikimic acid using ATP as a cosubstrate. The sequence is that of Shikimate kinase from Moorella thermoacetica (strain ATCC 39073 / JCM 9320).